Consider the following 475-residue polypeptide: 3-isopropylmalate dehydratase large subunit (475 aa).

Residues cysteine 353, cysteine 414, and cysteine 417 each coordinate [4Fe-4S] cluster.

This sequence belongs to the aconitase/IPM isomerase family. LeuC type 1 subfamily. As to quaternary structure, heterodimer of LeuC and LeuD. Requires [4Fe-4S] cluster as cofactor.

The enzyme catalyses (2R,3S)-3-isopropylmalate = (2S)-2-isopropylmalate. Its pathway is amino-acid biosynthesis; L-leucine biosynthesis; L-leucine from 3-methyl-2-oxobutanoate: step 2/4. Functionally, catalyzes the isomerization between 2-isopropylmalate and 3-isopropylmalate, via the formation of 2-isopropylmaleate. This is 3-isopropylmalate dehydratase large subunit from Marinomonas sp. (strain MWYL1).